Reading from the N-terminus, the 820-residue chain is Trimethylamine-N-oxide reductase (820 aa).

The segment at residues 1-33 (MAITRRSFLKGVATTSAASVIGPSLLASASANA) is a signal peptide (tat-type signal). Ser179 provides a ligand contact to Mo-bis(molybdopterin guanine dinucleotide).

It belongs to the prokaryotic molybdopterin-containing oxidoreductase family. The cofactor is Mo-bis(molybdopterin guanine dinucleotide). Post-translationally, predicted to be exported by the Tat system. The position of the signal peptide cleavage has not been experimentally proven.

It localises to the periplasm. It catalyses the reaction trimethylamine + 2 Fe(III)-[cytochrome c] + H2O = trimethylamine N-oxide + 2 Fe(II)-[cytochrome c] + 3 H(+). Functionally, reduces trimethylamine-N-oxide (TMAO) into trimethylamine; an anaerobic reaction coupled to energy-yielding reactions. The sequence is that of Trimethylamine-N-oxide reductase (torA) from Vibrio vulnificus (strain YJ016).